The sequence spans 122 residues: UPF0102 protein Ping_1176 (122 aa).

Belongs to the UPF0102 family.

The protein is UPF0102 protein Ping_1176 of Psychromonas ingrahamii (strain DSM 17664 / CCUG 51855 / 37).